Reading from the N-terminus, the 387-residue chain is Putative actin-29 (387 aa).

This sequence belongs to the actin family.

The protein resides in the cytoplasm. Its subcellular location is the cytoskeleton. It carries out the reaction ATP + H2O = ADP + phosphate + H(+). In terms of biological role, actins are highly conserved proteins that are involved in various types of cell motility and are ubiquitously expressed in all eukaryotic cells. Multiple isoforms are involved in various cellular functions such as cytoskeleton structure, cell mobility, chromosome movement and muscle contraction. The protein is Putative actin-29 (act29) of Dictyostelium discoideum (Social amoeba).